Here is a 664-residue protein sequence, read N- to C-terminus: Macoilin (664 aa).

Helical transmembrane passes span 28–48 (TFLYLKFLVVWALVLLADFVL), 75–95 (AFSVFFVCVAFTSNIICLLFI), 120–140 (VCLPTVSLWILFVYIEAAIRF), and 154–174 (FAAHCIGYPVVTLGFGFKSYV). Over residues 253 to 265 (REKGKEKDKDAKK) the composition is skewed to basic and acidic residues. Positions 253–274 (REKGKEKDKDAKKHNLGINNNN) are disordered. A Phosphoserine modification is found at Ser-305. A compositionally biased stretch (polar residues) spans 320–348 (KNYKNASGVVNSSPRSHSATNGSIPSSSS). The disordered stretch occupies residues 320–367 (KNYKNASGVVNSSPRSHSATNGSIPSSSSKNEKKQKCTSKSPSAHKDL). An N-linked (GlcNAc...) asparagine glycan is attached at Asn-324. Ser-332 is modified (phosphoserine). N-linked (GlcNAc...) asparagine glycans are attached at residues Asn-340 and Asn-452. Positions 630-664 (TSPLSPVSPHYSSKFVETSPSGLDPNASVYQPLKK) are disordered. 2 positions are modified to phosphoserine: Ser-631 and Ser-634. Residue Asn-655 is glycosylated (N-linked (GlcNAc...) asparagine).

It belongs to the macoilin family.

The protein resides in the rough endoplasmic reticulum membrane. Its subcellular location is the nucleus membrane. Functionally, plays a role in the regulation of neuronal activity. The polypeptide is Macoilin (MACO1) (Sus scrofa (Pig)).